Reading from the N-terminus, the 111-residue chain is Universal stress protein B (111 aa).

2 consecutive transmembrane segments (helical) span residues 1 to 21 and 90 to 110; these read MIST…NMAR and FILT…LMIW.

It belongs to the universal stress protein B family.

It is found in the cell inner membrane. The polypeptide is Universal stress protein B (Escherichia coli O45:K1 (strain S88 / ExPEC)).